A 744-amino-acid polypeptide reads, in one-letter code: Merozoite surface protein 9 (744 aa).

A signal peptide spans 1 to 23; the sequence is MMNMKIVLFSLLLFVIRWNIISC. An interaction with MSP1 and host SLC4A1/Band 3 region spans residues 77-235; it reads KELLKEKQYT…VNDEDDVNDE (159 aa). Disordered regions lie at residues 202 to 282, 459 to 487, 512 to 540, and 666 to 744; these read KSQG…ATAY, DNQA…PTED, NNTP…ENFD, and VDAL…EESK. Residues 211–224 are compositionally biased toward polar residues; that stretch reads SQNQNENNDNQKYQ. 8 tandem repeats follow at residues 226 to 231, 232 to 237, 238 to 243, 244 to 249, 250 to 255, 256 to 261, 262 to 267, and 268 to 273. The segment at 226 to 273 is 8 X 6 AA tandem repeats of [VT]-N-D-[ED]-[ED]-D; the sequence is VNDEDDVNDEEDTNDDEDTNDEEDTNDDEDTNDDEDTNDEEDTNDEED. Residues 226–274 show a composition bias toward acidic residues; sequence VNDEDDVNDEEDTNDDEDTNDEEDTNDDEDTNDDEDTNDEEDTNDEEDH. An interaction with MSP1 and host SLC4A1/Band 3 region spans residues 364–528; that stretch reads LKDNLINYEF…PPTQSKKKNK (165 aa). Basic and acidic residues predominate over residues 459–473; it reads DNQAVDTKSMEEPKV. The segment covering 512-521 has biased composition (low complexity); sequence NNTPNVVPPT. The stretch at 644 to 734 forms a coiled coil; sequence NQETEEEMEK…QEEEEEEEIV (91 aa). Composition is skewed to basic and acidic residues over residues 672–698 and 706–719; these read KNKE…KEKE and EKEK…KEEK. A compositionally biased stretch (acidic residues) spans 720-734; that stretch reads EKEEEQEEEEEEEIV.

Belongs to the plasmodium ABRA family. Forms a complex composed of MSP1, MSP6, MSP7, MSP9 and MSP3; within the complex, MSP6 and MSP9 mediate the binding to the host erythrocyte. Interacts with MSP1 subunits p19 and p42; the interaction is direct. Interacts with host SLC4A1/Band 3 protein (via the 5ABC region). MSP1 subunits p19 or p42, and MSP9 form a co-ligand complex that interacts with host SLC4A1/Band 3 protein. In terms of processing, not glycosylated.

Its subcellular location is the cell membrane. It localises to the parasitophorous vacuole lumen. The protein resides in the secreted. Functionally, during the asexual blood stage, involved in the sialic acid-independent (SAID) merozoite invasion of host erythrocytes by binding to host SLC4A1/Band 3 protein on the surface of the host erythrocyte. The chain is Merozoite surface protein 9 from Plasmodium falciparum (isolate 7G8).